The sequence spans 279 residues: Large ribosomal subunit protein uL2 (279 aa).

The disordered stretch occupies residues 202 to 279 (NASIGKAGRS…TSRHKSKKKG (78 aa)). Residues 209–220 (GRSRWLGRRPHN) are compositionally biased toward basic residues.

It belongs to the universal ribosomal protein uL2 family. Part of the 50S ribosomal subunit. Forms a bridge to the 30S subunit in the 70S ribosome.

Its function is as follows. One of the primary rRNA binding proteins. Required for association of the 30S and 50S subunits to form the 70S ribosome, for tRNA binding and peptide bond formation. It has been suggested to have peptidyltransferase activity; this is somewhat controversial. Makes several contacts with the 16S rRNA in the 70S ribosome. This is Large ribosomal subunit protein uL2 from Methylocella silvestris (strain DSM 15510 / CIP 108128 / LMG 27833 / NCIMB 13906 / BL2).